The following is an 88-amino-acid chain: Transmembrane protein 069R (88 aa).

The next 2 helical transmembrane spans lie at 30-50 (ALWP…VFTA) and 67-87 (VGVF…GDSF).

It localises to the host membrane. The polypeptide is Transmembrane protein 069R (Frog virus 3 (isolate Goorha) (FV-3)).